Consider the following 688-residue polypeptide: MAFEAYRLLIANPQLYEPDFVSQAGELSEHWARENWKRREESLRHDKVCMLLMNTEPRERSHTQAEGEEEGSSSRSLATEEGEKRFSLEALEGLVDQGREVLLENLEMEEAQANSDSEGPNEADSGGEGEEFVFGVESESEMEVASEVTKLLEPDLIDSNFRYTLLEGVTSGKFAQMEFTALWGINTNNKWDLVDRVNRKLIEVKVTTRPPTGVWEEVVAHAEGTDPEHNGAYIIHDDLCGNFTPYKFGNISDLPGWPSAQDFPIRRHAFLASYGGVPSAGGIEEGLPAWDDVFMERTRNWVAPLWKKGPISVRRDDCPRMEPFNITKFITLLEDPRLRNTDKSAKWKGKILPVSWCRTIISSQEKDIDMVQEVIRDLGVIGLWEEINANPVKVERTVSALSELMRLFQEGFREKNPYISVKRKCKGWVITGHKQTPALTDTLLELGVGYKPYQMSNVVEEDMRQCETDDIEKMKWVDWMSKLAATESEPLGSKVSRDDIFKEAESRHVLDEPAKKMCSKVYDLYRSHKIGATCSKFMGFYSRMGGSYLRAIAGNSRQHSSLAIMPLYYKTYQEDGTSTRHLTGLVIRGPHHVRESTDTINLLIVEKTCLSRREAQERLSGGALVNGVWWVRKNAIRKADPTYLAFLHNSLFVPTNFLGELVTTPKHFLRQRQPRILGRNPVWQLWLL.

Disordered regions lie at residues 54–82 and 110–129; these read NTEP…TEEG and EAQA…GGEG. Basic and acidic residues predominate over residues 56–65; the sequence is EPRERSHTQA. The segment covering 119 to 129 has biased composition (acidic residues); it reads GPNEADSGGEG.

RNA polymerase is composed of three subunits: PA, PB1 and PB2.

It localises to the virion. It is found in the host nucleus. Subunit of the RNA-dependent RNA polymerase which is responsible for replication and transcription of virus RNA segments. The transcription of viral mRNAs occurs by a unique mechanism called cap-snatching. 5' methylated caps of cellular mRNAs are cleaved after 10-13 nucleotides by PA. In turn, these short capped RNAs are used as primers by PB1 for transcription of viral mRNAs. During virus replication, PB1 initiates RNA synthesis and copy vRNA into complementary RNA (cRNA) which in turn serves as a template for the production of more vRNAs. The sequence is that of Polymerase acidic protein (PA) from Ixodidae (hardbacked ticks).